Here is a 90-residue protein sequence, read N- to C-terminus: FMRFamide-like neuropeptides 27 (90 aa).

The first 24 residues, 1 to 24, serve as a signal peptide directing secretion; that stretch reads MFSFRKFLAFMLIVIALMASFSSA. The propeptide occupies 25-36; that stretch reads QPIDEERPIFME. Phenylalanine amide is present on F61. The propeptide occupies 65-90; that stretch reads SSSPSDISMAELRAIYGGGPVEYVQL.

The protein belongs to the FARP (FMRFamide related peptide) family.

The protein localises to the secreted. Its function is as follows. FMRFamides and FMRFamide-like peptides are neuropeptides. This Caenorhabditis briggsae protein is FMRFamide-like neuropeptides 27.